The chain runs to 92 residues: YcgL domain-containing protein ASA_2166 (92 aa).

Residues 1 to 85 (MLCAVYKSRK…PPENLLEQHK (85 aa)) form the YcgL domain.

The chain is YcgL domain-containing protein ASA_2166 from Aeromonas salmonicida (strain A449).